Consider the following 173-residue polypeptide: Alpha-crystallin A chain (173 aa).

N-acetylmethionine is present on Met1. The segment at 1 to 63 (MDVTIQHPWF…RTVLDSGISE (63 aa)) is required for complex formation with BFSP1 and BFSP2. At Gln6 the chain carries Deamidated glutamine; partial. Ser45 carries the phosphoserine modification. Position 50 is a deamidated glutamine; partial (Gln50). One can recognise a sHSP domain in the interval 52-162 (LFRTVLDSGI…GHSERAIPVS (111 aa)). The residue at position 70 (Lys70) is an N6-acetyllysine. Position 90 is a deamidated glutamine; partial (Gln90). Position 99 is an N6-acetyllysine (Lys99). His100 serves as a coordination point for Zn(2+). Asn101 bears the Deamidated asparagine; partial mark. Residues Glu102 and His107 each contribute to the Zn(2+) site. The residue at position 122 (Ser122) is a Phosphoserine. The residue at position 123 (Asn123) is a Deamidated asparagine; partial. A disordered region spans residues 145-173 (KVQSGLDAGHSERAIPVSREEKPSSAPSS). The residue at position 147 (Gln147) is a Deamidated glutamine; partial. Residues 153–167 (GHSERAIPVSREEKP) show a composition bias toward basic and acidic residues. His154 contributes to the Zn(2+) binding site. O-linked (GlcNAc) serine glycosylation occurs at Ser162.

It belongs to the small heat shock protein (HSP20) family. As to quaternary structure, heteromer composed of three CRYAA and one CRYAB subunits. Inter-subunit bridging via zinc ions enhances stability, which is crucial as there is no protein turn over in the lens. Can also form homodimers and homotetramers (dimers of dimers) which serve as the building blocks of homooligomers. Within homooligomers, the zinc-binding motif is created from residues of 3 different molecules. His-100 and Glu-102 from one molecule are ligands of the zinc ion, and His-107 and His-154 residues from additional molecules complete the site with tetrahedral coordination geometry. Part of a complex required for lens intermediate filament formation composed of BFSP1, BFSP2 and CRYAA. Post-translationally, acetylation at Lys-70 may increase chaperone activity. In terms of processing, undergoes age-dependent proteolytical cleavage at the C-terminus.

Its subcellular location is the cytoplasm. It localises to the nucleus. Functionally, contributes to the transparency and refractive index of the lens. Acts as a chaperone, preventing aggregation of various proteins under a wide range of stress conditions. Required for the correct formation of lens intermediate filaments as part of a complex composed of BFSP1, BFSP2 and CRYAA. The chain is Alpha-crystallin A chain (CRYAA) from Cavia porcellus (Guinea pig).